The primary structure comprises 351 residues: Putative phospho-N-acetylmuramoyl-pentapeptide-transferase (351 aa).

10 helical membrane passes run 2 to 22 (MEFL…TLFI), 44 to 64 (AGTP…VTVL), 71 to 91 (LVLT…DDLL), 158 to 178 (GEKI…GAVG), 181 to 201 (GGFY…VGAI), 212 to 232 (GMAA…LGLS), 235 to 255 (ALPF…NRHP), 258 to 278 (IFMG…AVML), 281 to 301 (TVYF…VSLL), and 328 to 348 (IVLL…YMTG).

This sequence belongs to the glycosyltransferase 4 family. MraY subfamily. It depends on Mg(2+) as a cofactor.

The protein resides in the cell membrane. It carries out the reaction UDP-N-acetyl-alpha-D-muramoyl-L-alanyl-gamma-D-glutamyl-meso-2,6-diaminopimeloyl-D-alanyl-D-alanine + di-trans,octa-cis-undecaprenyl phosphate = di-trans,octa-cis-undecaprenyl diphospho-N-acetyl-alpha-D-muramoyl-L-alanyl-D-glutamyl-meso-2,6-diaminopimeloyl-D-alanyl-D-alanine + UMP. This chain is Putative phospho-N-acetylmuramoyl-pentapeptide-transferase, found in Methanothermobacter thermautotrophicus (strain ATCC 29096 / DSM 1053 / JCM 10044 / NBRC 100330 / Delta H) (Methanobacterium thermoautotrophicum).